Here is a 72-residue protein sequence, read N- to C-terminus: Translation initiation factor IF-1 (72 aa).

In terms of domain architecture, S1-like spans Met-1–Lys-72.

Belongs to the IF-1 family. As to quaternary structure, component of the 30S ribosomal translation pre-initiation complex which assembles on the 30S ribosome in the order IF-2 and IF-3, IF-1 and N-formylmethionyl-tRNA(fMet); mRNA recruitment can occur at any time during PIC assembly.

It is found in the cytoplasm. One of the essential components for the initiation of protein synthesis. Stabilizes the binding of IF-2 and IF-3 on the 30S subunit to which N-formylmethionyl-tRNA(fMet) subsequently binds. Helps modulate mRNA selection, yielding the 30S pre-initiation complex (PIC). Upon addition of the 50S ribosomal subunit IF-1, IF-2 and IF-3 are released leaving the mature 70S translation initiation complex. The polypeptide is Translation initiation factor IF-1 (Enterococcus faecalis (strain ATCC 700802 / V583)).